A 444-amino-acid chain; its full sequence is Probable glycine dehydrogenase (decarboxylating) subunit 1 (444 aa).

It belongs to the GcvP family. N-terminal subunit subfamily. The glycine cleavage system is composed of four proteins: P, T, L and H. In this organism, the P 'protein' is a heterodimer of two subunits.

It catalyses the reaction N(6)-[(R)-lipoyl]-L-lysyl-[glycine-cleavage complex H protein] + glycine + H(+) = N(6)-[(R)-S(8)-aminomethyldihydrolipoyl]-L-lysyl-[glycine-cleavage complex H protein] + CO2. The glycine cleavage system catalyzes the degradation of glycine. The P protein binds the alpha-amino group of glycine through its pyridoxal phosphate cofactor; CO(2) is released and the remaining methylamine moiety is then transferred to the lipoamide cofactor of the H protein. This is Probable glycine dehydrogenase (decarboxylating) subunit 1 from Moorella thermoacetica (strain ATCC 39073 / JCM 9320).